A 251-amino-acid polypeptide reads, in one-letter code: CDP-diacylglycerol pyrophosphatase (251 aa).

A helical transmembrane segment spans residues 4–24; that stretch reads AGLLFLVMIVIAVVAAGIGYW.

The protein belongs to the Cdh family.

The protein localises to the cell inner membrane. The enzyme catalyses a CDP-1,2-diacyl-sn-glycerol + H2O = a 1,2-diacyl-sn-glycero-3-phosphate + CMP + 2 H(+). It functions in the pathway phospholipid metabolism; CDP-diacylglycerol degradation; phosphatidate from CDP-diacylglycerol: step 1/1. The chain is CDP-diacylglycerol pyrophosphatase from Shigella flexneri.